A 365-amino-acid chain; its full sequence is Patr class I histocompatibility antigen, A-108 alpha chain (365 aa).

Positions 1–24 are cleaved as a signal peptide; that stretch reads MAVMPPRTLLLLLSGALALTQTWA. The tract at residues 25–114 is alpha-1; it reads GSHSMRYFYT…LRGYYNQSED (90 aa). The Extracellular segment spans residues 25–308; the sequence is GSHSMRYFYT…EPSSQPTIPI (284 aa). A glycan (N-linked (GlcNAc...) asparagine) is linked at asparagine 110. The tract at residues 115-206 is alpha-2; it reads GSHTIQIMYG…ENGKETLQRT (92 aa). Intrachain disulfides connect cysteine 125–cysteine 188 and cysteine 227–cysteine 283. The interval 207-298 is alpha-3; that stretch reads DPPKTHMTHH…GLPKPLTLRW (92 aa). An Ig-like C1-type domain is found at 209–295; sequence PKTHMTHHPI…QHEGLPKPLT (87 aa). A connecting peptide region spans residues 299–308; that stretch reads EPSSQPTIPI. Residues 309-332 form a helical membrane-spanning segment; sequence VGIIAGLVLLGAVITGAVVAAVMW. The Cytoplasmic segment spans residues 333-365; it reads RRKSSDRKGGSYTQAASSDSAQGSDVSLTACKV. Residues 339–360 form a disordered region; it reads RKGGSYTQAASSDSAQGSDVSL. Position 343 is a phosphoserine (serine 343). Tyrosine 344 is subject to Phosphotyrosine. Residues 346 to 359 show a composition bias toward low complexity; it reads QAASSDSAQGSDVS. 5 positions are modified to phosphoserine: serine 349, serine 350, serine 352, serine 356, and serine 359.

Belongs to the MHC class I family. As to quaternary structure, heterodimer of an alpha chain and a beta chain (beta-2-microglobulin).

The protein resides in the membrane. In terms of biological role, involved in the presentation of foreign antigens to the immune system. The polypeptide is Patr class I histocompatibility antigen, A-108 alpha chain (Patr-A) (Pan troglodytes (Chimpanzee)).